Reading from the N-terminus, the 555-residue chain is Glutamine--tRNA ligase (555 aa).

Positions 34 to 44 (PEPNGYLHIGH) match the 'HIGH' region motif. ATP contacts are provided by residues 35-37 (EPN) and 41-47 (HIGHAKS). Residues Asp-67 and Tyr-212 each coordinate L-glutamine. ATP-binding positions include Thr-231, 261–262 (RL), and 269–271 (MSK). Positions 268 to 272 (VMSKR) match the 'KMSKS' region motif. The segment at 317–324 (TKQDNTIE) is interaction with tRNA.

This sequence belongs to the class-I aminoacyl-tRNA synthetase family. In terms of assembly, monomer.

The protein resides in the cytoplasm. The catalysed reaction is tRNA(Gln) + L-glutamine + ATP = L-glutaminyl-tRNA(Gln) + AMP + diphosphate. This is Glutamine--tRNA ligase from Salmonella agona (strain SL483).